Reading from the N-terminus, the 661-residue chain is UvrABC system protein B (661 aa).

Residues 25–414 enclose the Helicase ATP-binding domain; sequence AGLSSKKRSQ…GTVVELIIRP (390 aa). 38-45 serves as a coordination point for ATP; that stretch reads GITGSGKT. The short motif at 91–114 is the Beta-hairpin element; sequence YYDYYQPEAYIARTDTFIEKDSSI. The 163-residue stretch at 430–592 folds into the Helicase C-terminal domain; sequence QVEDLISEIQ…IIPKTINRAI (163 aa). The region spanning 621 to 656 is the UVR domain; sequence KTHIDKLKKEMLKAASNLEFEQAVKLRDQLKTLEEA.

The protein belongs to the UvrB family. In terms of assembly, forms a heterotetramer with UvrA during the search for lesions. Interacts with UvrC in an incision complex.

It localises to the cytoplasm. The UvrABC repair system catalyzes the recognition and processing of DNA lesions. A damage recognition complex composed of 2 UvrA and 2 UvrB subunits scans DNA for abnormalities. Upon binding of the UvrA(2)B(2) complex to a putative damaged site, the DNA wraps around one UvrB monomer. DNA wrap is dependent on ATP binding by UvrB and probably causes local melting of the DNA helix, facilitating insertion of UvrB beta-hairpin between the DNA strands. Then UvrB probes one DNA strand for the presence of a lesion. If a lesion is found the UvrA subunits dissociate and the UvrB-DNA preincision complex is formed. This complex is subsequently bound by UvrC and the second UvrB is released. If no lesion is found, the DNA wraps around the other UvrB subunit that will check the other stand for damage. This Rickettsia conorii (strain ATCC VR-613 / Malish 7) protein is UvrABC system protein B.